The following is a 392-amino-acid chain: Small ribosomal subunit protein uS9m (392 aa).

Over residues 8-25 (RSSRAMSSASPASASDSD) the composition is skewed to low complexity. The tract at residues 8–27 (RSSRAMSSASPASASDSDTS) is disordered.

The protein belongs to the universal ribosomal protein uS9 family. In terms of assembly, component of the mitochondrial ribosome small subunit (28S) which comprises a 12S rRNA and about 30 distinct proteins.

The protein resides in the mitochondrion. The polypeptide is Small ribosomal subunit protein uS9m (mrps-9) (Caenorhabditis elegans).